The primary structure comprises 122 residues: MIQMQTNLDVADNSGARRVQCIKVLGGSHRRYAGIGDIIKVTVKEAIPRGKVKKGDVLNAVVVRTRKGVRRADGSTIRFDGNAAVMLNANKQPIGTRIFGPVTRELRSENFMKIISLAPEVL.

The protein belongs to the universal ribosomal protein uL14 family. As to quaternary structure, part of the 50S ribosomal subunit. Forms a cluster with proteins L3 and L19. In the 70S ribosome, L14 and L19 interact and together make contacts with the 16S rRNA in bridges B5 and B8.

Binds to 23S rRNA. Forms part of two intersubunit bridges in the 70S ribosome. The polypeptide is Large ribosomal subunit protein uL14 (Alteromonas mediterranea (strain DSM 17117 / CIP 110805 / LMG 28347 / Deep ecotype)).